Reading from the N-terminus, the 486-residue chain is Cardiolipin synthase A (486 aa).

2 consecutive transmembrane segments (helical) span residues 3 to 23 and 38 to 58; these read TFYT…IAGV and MAWL…YLSF. 2 consecutive PLD phosphodiesterase domains span residues 219–246 and 399–426; these read MDLR…VDPR and KDGL…DMRS. Catalysis depends on residues H224, K226, D231, H404, K406, and D411.

It belongs to the phospholipase D family. Cardiolipin synthase subfamily. ClsA sub-subfamily.

It localises to the cell inner membrane. It catalyses the reaction 2 a 1,2-diacyl-sn-glycero-3-phospho-(1'-sn-glycerol) = a cardiolipin + glycerol. In terms of biological role, catalyzes the reversible phosphatidyl group transfer from one phosphatidylglycerol molecule to another to form cardiolipin (CL) (diphosphatidylglycerol) and glycerol. The sequence is that of Cardiolipin synthase A from Pectobacterium carotovorum subsp. carotovorum (strain PC1).